The sequence spans 1633 residues: Serine-aspartate repeat-containing protein F (1633 aa).

A signal peptide spans 1–45 (MKKRRQGPINKRVDFLSNKVNKYSIRKFTVGTASILVGATLMFGA). Positions 46–678 (ADNEAKAAED…GSSTAQGDNP (633 aa)) are ligand binding A region. The disordered stretch occupies residues 51 to 269 (KAAEDNQLES…SISTDSSVND (219 aa)). Residues 61–74 (ASKEEQKGSRDNES) are compositionally biased toward basic and acidic residues. Composition is skewed to polar residues over residues 85 to 99 (GSHS…NNAT) and 146 to 168 (PKTS…DNLN). Residues 175–184 (KESKTDEHST) show a composition bias toward basic and acidic residues. Over residues 186–226 (QAQMSTNKSNLDTNDSPTQSEKTSSQANNDSTDNQSAPSKQ) the composition is skewed to polar residues. Residues 227 to 253 (LDSKPSEQKVYKTKFNDEPTQDVEHTT) show a composition bias toward basic and acidic residues. Residues 255 to 266 (KLKTPSISTDSS) are compositionally biased toward polar residues. 4 consecutive CNA-B domains span residues 679–797 (TYSL…YLTP), 798–907 (KYNV…FYKP), 908–1018 (IYNL…YKTP), and 1019–1129 (KYSV…FDDD). The interval 679-1129 (TYSLGDYVWL…SIDNGYFDDD (451 aa)) is type I collagen binding region. Residues 862–889 (FETPEGYTPTKQNSGSDEGKDSNGTKTT) form a disordered region. The segment at 1085–1608 (KPEGMTQTTA…ANEDHDSKGT (524 aa)) is disordered. Residues 1107 to 1119 (EDVRVTITDHDDF) are compositionally biased toward basic and acidic residues. Positions 1125–1584 (YFDDDSDSDS…DSDSDSDSDS (460 aa)) are enriched in acidic residues. Basic and acidic residues predominate over residues 1585-1606 (DSDKNAKDKLPDTGANEDHDSK). Positions 1594-1598 (LPDTG) match the LPXTG sorting signal motif. Pentaglycyl murein peptidoglycan amidated threonine is present on threonine 1597. A propeptide spans 1598 to 1633 (GANEDHDSKGTLLGTLFAGLGALLLGRRRKKDNKEK) (removed by sortase).

This sequence belongs to the serine-aspartate repeat-containing protein (SDr) family.

It localises to the secreted. The protein localises to the cell wall. Its function is as follows. Binds to type I collagen via alpha-2(I) or alpha-1(I) chains. In Staphylococcus epidermidis (strain ATCC 12228 / FDA PCI 1200), this protein is Serine-aspartate repeat-containing protein F (sdrF).